A 103-amino-acid chain; its full sequence is N(4)-acetylcytidine amidohydrolase (103 aa).

Residues 6 to 94 (ITFFQRFQND…IAEIYPNQTQ (89 aa)) enclose the ASCH domain. The active-site Proton acceptor is K21. Catalysis depends on T24, which acts as the Nucleophile. Residue E74 is the Proton donor of the active site.

It belongs to the N(4)-acetylcytidine amidohydrolase family.

The enzyme catalyses N(4)-acetylcytidine + H2O = cytidine + acetate + H(+). It carries out the reaction N(4)-acetyl-2'-deoxycytidine + H2O = 2'-deoxycytidine + acetate + H(+). It catalyses the reaction N(4)-acetylcytosine + H2O = cytosine + acetate + H(+). Its function is as follows. Catalyzes the hydrolysis of N(4)-acetylcytidine (ac4C). This is N(4)-acetylcytidine amidohydrolase (yqfB) from Salmonella typhi.